The primary structure comprises 24 residues: Brevinin-1Lb (24 aa).

A disulfide bridge connects residues Cys-18 and Cys-24.

In terms of tissue distribution, expressed by the skin glands.

Its subcellular location is the secreted. Its function is as follows. Antibacterial activity against Gram-positive bacterium S.aureus and Gram-negative bacterium E.coli. This chain is Brevinin-1Lb, found in Rana luteiventris (Columbia spotted frog).